A 157-amino-acid polypeptide reads, in one-letter code: Isotocin-neurophysin IT 1 (157 aa).

Residues 1–20 form the signal peptide; it reads MFGTSVSALCLLFLLSVCTA. Cysteines 21 and 26 form a disulfide. A Glycine amide modification is found at G29. Intrachain disulfides connect C42–C86, C45–C59, C53–C76, C60–C66, C93–C106, C100–C118, and C107–C112.

It belongs to the vasopressin/oxytocin family. Post-translationally, seven disulfide bonds are present in neurophysin.

The protein resides in the secreted. In terms of biological role, isotocin causes contraction of smooth muscles. This chain is Isotocin-neurophysin IT 1, found in Oncorhynchus keta (Chum salmon).